A 70-amino-acid polypeptide reads, in one-letter code: Protein SlyX homolog (70 aa).

The protein belongs to the SlyX family.

The chain is Protein SlyX homolog from Shewanella woodyi (strain ATCC 51908 / MS32).